A 104-amino-acid chain; its full sequence is Replication restart protein PriB (104 aa).

The region spanning 1–101 is the SSB domain; that stretch reads MTNRLVLSGT…LHAEQIDLID (101 aa).

The protein belongs to the PriB family. As to quaternary structure, homodimer. Interacts with PriA and DnaT. Component of the replication restart primosome. Primosome assembly occurs via a 'hand-off' mechanism. PriA binds to replication forks, subsequently PriB then DnaT bind; DnaT then displaces ssDNA to generate the helicase loading substrate.

Involved in the restart of stalled replication forks, which reloads the replicative helicase on sites other than the origin of replication; the PriA-PriB pathway is the major replication restart pathway. During primosome assembly it facilitates complex formation between PriA and DnaT on DNA; stabilizes PriA on DNA. Stimulates the DNA unwinding activity of PriA helicase. This is Replication restart protein PriB from Enterobacter sp. (strain 638).